Here is a 690-residue protein sequence, read N- to C-terminus: Methionine--tRNA ligase (690 aa).

The 'HIGH' region motif lies at 12–22; the sequence is PYANGPLHLGH. 4 residues coordinate Zn(2+): Cys-144, Cys-147, Cys-157, and Cys-160. Residues 333–337 carry the 'KMSKS' region motif; sequence QFSKS. Residue Lys-336 participates in ATP binding. A tRNA-binding domain is found at 535–632; the sequence is KKINIDLMVG…VNADDGSRMK (98 aa).

This sequence belongs to the class-I aminoacyl-tRNA synthetase family. MetG type 1 subfamily. Homodimer. Zn(2+) is required as a cofactor.

It localises to the cytoplasm. The enzyme catalyses tRNA(Met) + L-methionine + ATP = L-methionyl-tRNA(Met) + AMP + diphosphate. Is required not only for elongation of protein synthesis but also for the initiation of all mRNA translation through initiator tRNA(fMet) aminoacylation. This chain is Methionine--tRNA ligase, found in Picrophilus torridus (strain ATCC 700027 / DSM 9790 / JCM 10055 / NBRC 100828 / KAW 2/3).